Consider the following 265-residue polypeptide: NAD kinase (265 aa).

Asp45 serves as the catalytic Proton acceptor. NAD(+)-binding positions include Asp45–Gly46, Asn122–Glu123, Arg148, Asp150, Thr161–Ser166, and Ala185.

It belongs to the NAD kinase family. Requires a divalent metal cation as cofactor.

Its subcellular location is the cytoplasm. The enzyme catalyses NAD(+) + ATP = ADP + NADP(+) + H(+). Functionally, involved in the regulation of the intracellular balance of NAD and NADP, and is a key enzyme in the biosynthesis of NADP. Catalyzes specifically the phosphorylation on 2'-hydroxyl of the adenosine moiety of NAD to yield NADP. The polypeptide is NAD kinase (Lactobacillus delbrueckii subsp. bulgaricus (strain ATCC 11842 / DSM 20081 / BCRC 10696 / JCM 1002 / NBRC 13953 / NCIMB 11778 / NCTC 12712 / WDCM 00102 / Lb 14)).